A 363-amino-acid polypeptide reads, in one-letter code: Phosphoserine aminotransferase (363 aa).

L-glutamate contacts are provided by Ser9 and Arg42. Pyridoxal 5'-phosphate-binding positions include 76 to 77, Trp102, Thr154, Asp174, and Gln197; that span reads AR. Lys198 carries the N6-(pyridoxal phosphate)lysine modification. 240 to 241 serves as a coordination point for pyridoxal 5'-phosphate; that stretch reads NT.

This sequence belongs to the class-V pyridoxal-phosphate-dependent aminotransferase family. SerC subfamily. In terms of assembly, homodimer. Pyridoxal 5'-phosphate is required as a cofactor.

It is found in the cytoplasm. The catalysed reaction is O-phospho-L-serine + 2-oxoglutarate = 3-phosphooxypyruvate + L-glutamate. It carries out the reaction 4-(phosphooxy)-L-threonine + 2-oxoglutarate = (R)-3-hydroxy-2-oxo-4-phosphooxybutanoate + L-glutamate. Its pathway is amino-acid biosynthesis; L-serine biosynthesis; L-serine from 3-phospho-D-glycerate: step 2/3. It participates in cofactor biosynthesis; pyridoxine 5'-phosphate biosynthesis; pyridoxine 5'-phosphate from D-erythrose 4-phosphate: step 3/5. Functionally, catalyzes the reversible conversion of 3-phosphohydroxypyruvate to phosphoserine and of 3-hydroxy-2-oxo-4-phosphonooxybutanoate to phosphohydroxythreonine. In Baumannia cicadellinicola subsp. Homalodisca coagulata, this protein is Phosphoserine aminotransferase.